Reading from the N-terminus, the 479-residue chain is Ribulose bisphosphate carboxylase large chain 2 (479 aa).

Residues Asn116 and Thr166 each contribute to the substrate site. Catalysis depends on Lys168, which acts as the Proton acceptor. Lys170 contributes to the substrate binding site. Mg(2+)-binding residues include Lys194, Asp196, and Glu197. Lys194 is subject to N6-carboxylysine. The Proton acceptor role is filled by His287. Arg288, His320, and Ser372 together coordinate substrate.

Belongs to the RuBisCO large chain family. Type I subfamily. As to quaternary structure, heterohexadecamer of 8 large chains and 8 small chains. The cofactor is Mg(2+).

The enzyme catalyses 2 (2R)-3-phosphoglycerate + 2 H(+) = D-ribulose 1,5-bisphosphate + CO2 + H2O. It carries out the reaction D-ribulose 1,5-bisphosphate + O2 = 2-phosphoglycolate + (2R)-3-phosphoglycerate + 2 H(+). Its function is as follows. RuBisCO catalyzes two reactions: the carboxylation of D-ribulose 1,5-bisphosphate, the primary event in carbon dioxide fixation, as well as the oxidative fragmentation of the pentose substrate. Both reactions occur simultaneously and in competition at the same active site. In Bradyrhizobium sp. (strain BTAi1 / ATCC BAA-1182), this protein is Ribulose bisphosphate carboxylase large chain 2.